Reading from the N-terminus, the 482-residue chain is tRNA sulfurtransferase (482 aa).

Residues 61-165 (VQICDALTRI…QDVLILVKAR (105 aa)) form the THUMP domain. Residues 183–184 (LI), Lys-265, Gly-287, and Gln-296 each bind ATP. Residues Cys-344 and Cys-456 are joined by a disulfide bond. The Rhodanese domain occupies 404 to 482 (FAPTDVLLDI…GFDNVKVYRP (79 aa)). Catalysis depends on Cys-456, which acts as the Cysteine persulfide intermediate.

It belongs to the ThiI family.

Its subcellular location is the cytoplasm. The enzyme catalyses [ThiI sulfur-carrier protein]-S-sulfanyl-L-cysteine + a uridine in tRNA + 2 reduced [2Fe-2S]-[ferredoxin] + ATP + H(+) = [ThiI sulfur-carrier protein]-L-cysteine + a 4-thiouridine in tRNA + 2 oxidized [2Fe-2S]-[ferredoxin] + AMP + diphosphate. It carries out the reaction [ThiS sulfur-carrier protein]-C-terminal Gly-Gly-AMP + S-sulfanyl-L-cysteinyl-[cysteine desulfurase] + AH2 = [ThiS sulfur-carrier protein]-C-terminal-Gly-aminoethanethioate + L-cysteinyl-[cysteine desulfurase] + A + AMP + 2 H(+). It participates in cofactor biosynthesis; thiamine diphosphate biosynthesis. Functionally, catalyzes the ATP-dependent transfer of a sulfur to tRNA to produce 4-thiouridine in position 8 of tRNAs, which functions as a near-UV photosensor. Also catalyzes the transfer of sulfur to the sulfur carrier protein ThiS, forming ThiS-thiocarboxylate. This is a step in the synthesis of thiazole, in the thiamine biosynthesis pathway. The sulfur is donated as persulfide by IscS. The polypeptide is tRNA sulfurtransferase (Photorhabdus laumondii subsp. laumondii (strain DSM 15139 / CIP 105565 / TT01) (Photorhabdus luminescens subsp. laumondii)).